The following is a 547-amino-acid chain: MEIAAETTGPAGVTTDVTNAEESTEQPATRYMQGWALASLTVAFMSICLVLAIDNTILATAIPHITSDFKSLNDIGWYGSSYLIAQMALLPTCGRLYAFYNIKWVYCLSLAIFELGSIIAAVAPNSMSLIIGRAISGLGAAGLVSGTTTILSYCVSLRNQAMLSPIVLGMYNIGSAMGPLIGGSITDNKVLTWRFIFWINLPFGAVALVLVWFTLRKPPPAVKGNLLWVQKLRQLDLPGATLLLGATTCLNLALQWGGIVYPWSDSKVFGCLIGFGLLLITFLCLQWRGKENANIPLRIFRSRTVSASCGFMMLVQVAIVVQSYFWPIYFQSVRNTNARDSGINLLPLIISNSLSTLCAGSLASRFGHYVPFMWVGPLILATGGGLYQLVRPDTPSGKWIGFQILSGVGYGCCSQMPILAVQVVLRKPDIPTGLVMIMFFQMLGGALAPSVGQNLFTDGLLRNLTKVQGIDATAVVAAGASGFRAIVPSELLNAVVDAFNSALRDVFWVGVATPALAWIASWAMEWRQLPDSKKKVTETPAEEGREK.

Residues 1–23 (MEIAAETTGPAGVTTDVTNAEES) are disordered. 13 helical membrane passes run 33–53 (QGWA…VLAI), 74–94 (DIGW…PTCG), 104–124 (WVYC…AVAP), 135–155 (ISGL…SYCV), 165–185 (PIVL…GGSI), 195–215 (FIFW…WFTL), 240–260 (ATLL…GGIV), 267–287 (KVFG…CLQW), 310–330 (GFMM…PIYF), 343–363 (INLL…GSLA), 370–390 (VPFM…YQLV), 399–419 (WIGF…MPIL), and 432–452 (TGLV…PSVG). Asn463 carries N-linked (GlcNAc...) asparagine glycosylation. Residues 506–526 (VFWVGVATPALAWIASWAMEW) form a helical membrane-spanning segment.

Belongs to the major facilitator superfamily. TCR/Tet family.

It localises to the cell membrane. In terms of biological role, MFS-type transporter; part of the gene cluster that mediates the biosynthesis of luteodienoside A, a glycosylated polyketide consisting of an unusual 1-O-beta-D-glucopyranosyl-myo-inositol (glucinol) ester of 3-hydroxy-2,2,4-trimethylocta-4,6-dienoic acid. LtbE is probably involved in the secretion of luteodienoside A. The polypeptide is MFS-type transporter ltbE (Aspergillus luteorubrus).